We begin with the raw amino-acid sequence, 300 residues long: Protein YIF1B (300 aa).

The tract at residues 1–46 is disordered; the sequence is MNQESSFRAPPKRRVRGPNPNISTPHQLFDDTSGGPVPHGGEYPNH. The Cytoplasmic portion of the chain corresponds to 1 to 142; it reads MNQESSFRAP…APRFDINAPD (142 aa). The helical transmembrane segment at 143–163 threads the bilayer; that stretch reads LYIPVMAFITYILVAGLALGT. Topologically, residues 164–178 are extracellular; sequence QSRFSPEILGMQASS. A helical transmembrane segment spans residues 179–199; the sequence is ALAWLIVEVLAILLSLYLVTV. Topologically, residues 200-205 are cytoplasmic; that stretch reads NTDLTT. The chain crosses the membrane as a helical span at residues 206–226; that stretch reads VDLVAFSGYKYVGMISGVISG. Residue Leu227 is a topological domain, extracellular. A helical membrane pass occupies residues 228–248; that stretch reads LFGKTGYYVVLSWCGISVVFF. Topologically, residues 249-278 are cytoplasmic; that stretch reads MIRTLRLKILSEAAAEGVLVRGARNQLRMY. The chain crosses the membrane as a helical span at residues 279-299; it reads LTMAIAAVQPIFMYWLTYHLV. A topological domain (extracellular) is located at residue Arg300.

It belongs to the YIF1 family.

It localises to the endoplasmic reticulum membrane. The protein localises to the golgi apparatus membrane. The protein resides in the endoplasmic reticulum-Golgi intermediate compartment membrane. In terms of biological role, functions in endoplasmic reticulum to Golgi vesicle-mediated transport and regulates the proper organization of the endoplasmic reticulum and the Golgi. Plays a key role in targeting to neuronal dendrites receptors such as HTR1A. Plays also a role in primary cilium and sperm flagellum assembly probably through protein transport to these compartments. This Xenopus tropicalis (Western clawed frog) protein is Protein YIF1B (yif1b).